Here is a 90-residue protein sequence, read N- to C-terminus: uncharacterized protein (90 aa).

The interval 25-90 (GEAAYNSPTN…PPIAPPPILD (66 aa)) is disordered. 2 stretches are compositionally biased toward polar residues: residues 30-54 (NSPT…TESV) and 65-79 (NDQT…SNVN).

This is an uncharacterized protein from Bacillus subtilis (strain 168).